An 881-amino-acid polypeptide reads, in one-letter code: Cell wall protein PRY3 (881 aa).

The first 18 residues, 1 to 18 (MLEFPISVLLGCLVAVKA), serve as a signal peptide directing secretion. The region spanning 30–144 (LNEHNKFRAL…TWNNYIVCSY (115 aa)) is the SCP domain. N101 carries an N-linked (GlcNAc...) asparagine glycan. The segment at 262 to 313 (VVSSDATSSTTTTSSVATSSSTTSSDPTSSTAAASSSDPASSSAAASSSAST) is disordered. N360 carries N-linked (GlcNAc...) asparagine glycosylation. Disordered stretches follow at residues 381 to 400 (AADD…VSEH) and 453 to 494 (VSST…NSAA). Over residues 386 to 400 (QGSTSKEATSSVSEH) the composition is skewed to polar residues. 4 N-linked (GlcNAc...) asparagine glycosylation sites follow: N488, N535, N547, and N569. Positions 579 to 611 (IDPTLDPTDNSASPTDNAKHTSTYGSSSTGASL) are disordered. The segment covering 585 to 594 (PTDNSASPTD) has biased composition (polar residues). The segment covering 599 to 611 (TSTYGSSSTGASL) has biased composition (low complexity). The N-linked (GlcNAc...) asparagine glycan is linked to N625. 2 disordered regions span residues 758–788 (LASD…TTTT) and 800–830 (PSST…MHQP). Low complexity-rich tracts occupy residues 776–788 (STSN…TTTT) and 808–820 (RTTT…STTS). Positions 821-830 (QQDGSAMHQP) are enriched in polar residues. Residue G853 is the site of GPI-anchor amidated glycine attachment. A propeptide spans 854–881 (AATPLSIFQCNSLAGTIAAFVVAVLFAF) (removed in mature form).

The protein belongs to the CRISP family. In terms of processing, the GPI-anchor is attached to the protein in the endoplasmic reticulum and serves to target the protein to the cell surface. There, the glucosamine-inositol phospholipid moiety is cleaved off and the GPI-modified mannoprotein is covalently attached via its lipidless GPI glycan remnant to the 1,6-beta-glucan of the outer cell wall layer.

Its subcellular location is the secreted. It localises to the cell wall. The protein resides in the membrane. In terms of biological role, the full-length isoform (isoform Long) is a daughter cell-specific cell wall protein required for efficient export of lipids such as acetylated sterols. Acts in detoxification of hydrophobic compounds. Involved in tolerance to organic solvents such as dimethyl sulfoxide (DMSO). Also plays a role as an inhibitor of mating. STE12 is utilized as a repressor of full-length PRY3 transcription, ensuring efficient mating. Functionally, there is no evidence that production of the short PRY3 transcript (isoform Short) is anything more than an adventitious by-product of the mechanism responsible for the repression of the full-length transcript. Moreover, no disadvantage is detectable for cells unable to make the short transcript. In Saccharomyces cerevisiae (strain ATCC 204508 / S288c) (Baker's yeast), this protein is Cell wall protein PRY3 (PRY3).